A 533-amino-acid polypeptide reads, in one-letter code: Probable anion transporter 4, chloroplastic (533 aa).

12 helical membrane passes run 117 to 137 (MLALALALCNADRVVMSVAIV), 152 to 172 (IVQSSFLWGYLISPIAGGTLV), 179 to 199 (VVMAWGVALWSLATFLTPWAA), 203 to 223 (LWALLAARAMVGVAEGVALPC), 243 to 263 (IAMAGFQLGNVVGLMLSPILM), 267 to 287 (GIYGPFVIFGLSGFLWLLVWL), 342 to 362 (VIVANSMHSWGFFVILSWMPI), 376 to 396 (AWFSAVPWSMMAFTGYIAGFW), 417 to 437 (IGFIGPGIALIGLTTAKQPLV), 438 to 458 (ASAWLSLAVGLKSFSHLGFLI), 474 to 494 (MCLTAGTLAAIVGTVGAGFFV), and 502 to 522 (GFILLTAILYLLSALFYNIYA).

Belongs to the major facilitator superfamily. Sodium/anion cotransporter (TC 2.A.1.14) family. Expressed in leaf veins and root tips.

The protein resides in the plastid. Its subcellular location is the chloroplast membrane. Inorganic phosphate and probable anion transporter. The protein is Probable anion transporter 4, chloroplastic (ANTR4) of Arabidopsis thaliana (Mouse-ear cress).